Consider the following 360-residue polypeptide: Peptide chain release factor 1 (360 aa).

An N5-methylglutamine modification is found at Gln235. A disordered region spans residues 284–313 (AKRQQAEASTRRNLLGSGDRSDRNRTYNFP).

Belongs to the prokaryotic/mitochondrial release factor family. Methylated by PrmC. Methylation increases the termination efficiency of RF1.

The protein localises to the cytoplasm. Its function is as follows. Peptide chain release factor 1 directs the termination of translation in response to the peptide chain termination codons UAG and UAA. In Escherichia coli O127:H6 (strain E2348/69 / EPEC), this protein is Peptide chain release factor 1.